Consider the following 124-residue polypeptide: MHLKPVETVQDTPTFATADPTILGPIPMEHGLILAAIIFAIGLCGVMVRRNFLFMLMSLEIMMSAAGLAFIVAGSHWLSADGQIMFIFILTLAAAEASLGLAILLQFYHRRGHLDVDSANEMRG.

The next 3 membrane-spanning stretches (helical) occupy residues 28 to 48 (MEHGLILAAIIFAIGLCGVMV), 52 to 72 (FLFMLMSLEIMMSAAGLAFIV), and 84 to 104 (IMFIFILTLAAAEASLGLAIL).

This sequence belongs to the complex I subunit 4L family. As to quaternary structure, NDH-1 is composed of 14 different subunits. Subunits NuoA, H, J, K, L, M, N constitute the membrane sector of the complex.

The protein resides in the cell inner membrane. The enzyme catalyses a quinone + NADH + 5 H(+)(in) = a quinol + NAD(+) + 4 H(+)(out). NDH-1 shuttles electrons from NADH, via FMN and iron-sulfur (Fe-S) centers, to quinones in the respiratory chain. The immediate electron acceptor for the enzyme in this species is believed to be ubiquinone. Couples the redox reaction to proton translocation (for every two electrons transferred, four hydrogen ions are translocated across the cytoplasmic membrane), and thus conserves the redox energy in a proton gradient. The sequence is that of NADH-quinone oxidoreductase subunit K from Psychrobacter sp. (strain PRwf-1).